The following is a 369-amino-acid chain: Tetraacyldisaccharide 4'-kinase (369 aa).

Position 68–75 (68–75 (VVGGTGKT)) interacts with ATP.

This sequence belongs to the LpxK family.

It carries out the reaction a lipid A disaccharide + ATP = a lipid IVA + ADP + H(+). It functions in the pathway glycolipid biosynthesis; lipid IV(A) biosynthesis; lipid IV(A) from (3R)-3-hydroxytetradecanoyl-[acyl-carrier-protein] and UDP-N-acetyl-alpha-D-glucosamine: step 6/6. Functionally, transfers the gamma-phosphate of ATP to the 4'-position of a tetraacyldisaccharide 1-phosphate intermediate (termed DS-1-P) to form tetraacyldisaccharide 1,4'-bis-phosphate (lipid IVA). This Chlamydia trachomatis serovar D (strain ATCC VR-885 / DSM 19411 / UW-3/Cx) protein is Tetraacyldisaccharide 4'-kinase.